The primary structure comprises 334 residues: Beta-hexosaminidase (334 aa).

Residues Asp-60, Arg-68, Arg-133, and 163 to 164 (KH) contribute to the substrate site. His-176 functions as the Proton donor/acceptor in the catalytic mechanism. Asp-247 (nucleophile) is an active-site residue.

This sequence belongs to the glycosyl hydrolase 3 family. NagZ subfamily.

It is found in the cytoplasm. It carries out the reaction Hydrolysis of terminal non-reducing N-acetyl-D-hexosamine residues in N-acetyl-beta-D-hexosaminides.. It functions in the pathway cell wall biogenesis; peptidoglycan recycling. Functionally, plays a role in peptidoglycan recycling by cleaving the terminal beta-1,4-linked N-acetylglucosamine (GlcNAc) from peptide-linked peptidoglycan fragments, giving rise to free GlcNAc, anhydro-N-acetylmuramic acid and anhydro-N-acetylmuramic acid-linked peptides. The sequence is that of Beta-hexosaminidase from Xanthomonas euvesicatoria pv. vesicatoria (strain 85-10) (Xanthomonas campestris pv. vesicatoria).